The sequence spans 175 residues: Peptide methionine sulfoxide reductase MsrA (175 aa).

The active site involves cysteine 10.

It belongs to the MsrA Met sulfoxide reductase family.

The catalysed reaction is L-methionyl-[protein] + [thioredoxin]-disulfide + H2O = L-methionyl-(S)-S-oxide-[protein] + [thioredoxin]-dithiol. It catalyses the reaction [thioredoxin]-disulfide + L-methionine + H2O = L-methionine (S)-S-oxide + [thioredoxin]-dithiol. In terms of biological role, has an important function as a repair enzyme for proteins that have been inactivated by oxidation. Catalyzes the reversible oxidation-reduction of methionine sulfoxide in proteins to methionine. This is Peptide methionine sulfoxide reductase MsrA from Clavibacter michiganensis subsp. michiganensis (strain NCPPB 382).